Consider the following 353-residue polypeptide: MSEPLKPRIDFAEPLKEEPTSAFKAQQTFSEAESRTFAPAAIDERPEDEGVAEAAVDAALRPKRSLWRKMVMGGLALFGASVVGQGVQWTMNAWQTQDWVALGGCAAGALIVGAGVGSVVTEWRRLWRLRQRAHERDEARELLHSHSVGKGRAFCEKLAQQAGIDQSHPVLQRWYAAIHETQNDREIVGLYANLVQPVLDAQARREISRFAAESTLMIAVSPLALVDMAFIAWRNLRLINRIATLYGIELGYYSRLRLFRLVLLNIAFAGASELVREVGMDWMSQDLAARLSTRAAQGIGAGLLTARLGIKAMELCRPLPWIDNDKPRLGDFRRQLIGQLKETLQKSKSSPEK.

The span at 1–19 shows a compositional bias: basic and acidic residues; sequence MSEPLKPRIDFAEPLKEEP. Residues 1-35 are disordered; sequence MSEPLKPRIDFAEPLKEEPTSAFKAQQTFSEAESR. The next 3 helical transmembrane spans lie at 70-90, 100-120, and 213-233; these read MVMGGLALFGASVVGQGVQWT, VALGGCAAGALIVGAGVGSVV, and ESTLMIAVSPLALVDMAFIAW.

It belongs to the UPF0283 family.

Its subcellular location is the cell inner membrane. The polypeptide is UPF0283 membrane protein YcjF (Salmonella paratyphi A (strain AKU_12601)).